A 713-amino-acid chain; its full sequence is F-box/WD repeat-containing protein 7 (713 aa).

Residues 1–150 form a disordered region; that stretch reads MNQELLSVGS…DEHTHNSNVT (150 aa). Position 26 is a phosphoserine (Ser-26). Basic and acidic residues predominate over residues 46-55; it reads RHQEEEHTAR. The span at 69–84 shows a compositional bias: polar residues; it reads QNDSQQGQVEENNNRF. The segment covering 87 to 135 has biased composition (acidic residues); the sequence is VDEDSSGNQEEQEEDEEHAGEQEEEEEEEEEEEEEEEMDQESDDFDQSD. Positions 94-136 form a coiled coil; the sequence is NQEEQEEDEEHAGEQEEEEEEEEEEEEEEEMDQESDDFDQSDD. Positions 136-145 are enriched in basic and acidic residues; it reads DSSREDEHTH. At Thr-211 the chain carries Phosphothreonine. Ser-233 carries the post-translational modification Phosphoserine. The region spanning 284–330 is the F-box domain; that stretch reads RDFISLLPKELALYVLSFLEPKDLLQAAQTCRYWRILAEDNLLWREK. WD repeat units follow at residues 384 to 424, 426 to 462, 465 to 504, 506 to 542, 545 to 584, 586 to 624, and 628 to 665; these read GHDD…RTLV, HTGG…CIHT, GHTS…HVLM, HVAA…CLHT, GHTN…HTLT, HQSL…QTLQ, and KHQS…FIRN.

As to quaternary structure, homodimer; homodimerization plays a role in substrate binding and/or ubiquitination and degradation. Component of the SCF(FBXW7) complex consisting of CUL1, RBX1, SKP1 and FBXW7. Interacts (via F-box domain) with SKP1. Interacts (via F-box domain) with pseudophosphatase STYX; the interaction is direct and prevents FBXW7 interaction with SKP1. Interacts with cyclin-E (CCNE1 or CCNE2). Interacts with PSEN1. Forms a trimeric complex with NOTCH1 and SGK1. Interacts with NOTCH1 intracellular domain/NICD and NOTCH4 intracellular domain/NICD. Interacts with NOTCH2 intracellular domain (N2ICD). Interacts with MYC (when phosphorylated). Interacts with USP28, counteracting ubiquitination of MYC. Interacts (when phosphorylated at Thr-211) with PIN1, disrupting FBXW7 dimerization and promoting FBXW7 autoubiquitination and degradation. Interacts with UBE2QL1. Interacts with FAM83D; promotes FBXW7 degradation. Interacts with MYCN; FBXW7 competes with AURKA for binding to unphosphorylated MYCN but not for binding to phosphorylated MYCN. Interacts with JUN. Found in a complex with JUN and PRR7. Interacts with JUN and PRR7; the interaction inhibits ubiquitination-mediated JUN degradation, promoting its phosphorylation and transcriptional activity. Interacts with NFE2L1. Interacts with NR1D1. Interacts with RICTOR; mediates RICTOR ubiquitination and degradation. Phosphorylation at Thr-211 promotes interaction with PIN1, leading to disrupt FBXW7 dimerization and promoting FBXW7 autoubiquitination and degradation. Phosphorylated by ATM at Ser-26 in response to DNA damage, promoting recruitment to DNA damage sites and 'Lys-63'-linked ubiquitination of phosphorylated XRCC4. Post-translationally, ubiquitinated: autoubiquitinates following phosphorylation at Thr-211 and subsequent interaction with PIN1. Ubiquitination leads to its degradation.

It is found in the nucleus. Its subcellular location is the nucleoplasm. The protein localises to the chromosome. Its pathway is protein modification; protein ubiquitination. Substrate recognition component of a SCF (SKP1-CUL1-F-box protein) E3 ubiquitin-protein ligase complex which mediates the ubiquitination and subsequent proteasomal degradation of target proteins. Recognizes and binds phosphorylated sites/phosphodegrons within target proteins and thereafter brings them to the SCF complex for ubiquitination. Identified substrates include cyclin-E (CCNE1 or CCNE2), JUN, MYC, NOTCH1 released notch intracellular domain (NICD), NOTCH2, MCL1, MLST8, RICTOR and probably PSEN1. Acts as a negative regulator of JNK signaling by binding to phosphorylated JUN and promoting its ubiquitination and subsequent degradation. SCF(FBXW7) complex mediates the ubiquitination and subsequent degradation of NFE2L1. Involved in bone homeostasis and negative regulation of osteoclast differentiation. Regulates the amplitude of the cyclic expression of hepatic core clock genes and genes involved in lipid and glucose metabolism via ubiquitination and proteasomal degradation of their transcriptional repressor NR1D1; CDK1-dependent phosphorylation of NR1D1 is necessary for SCF(FBXW7)-mediated ubiquitination. Also able to promote 'Lys-63'-linked ubiquitination in response to DNA damage. The SCF(FBXW7) complex facilitates double-strand break repair following phosphorylation by ATM: phosphorylation promotes localization to sites of double-strand breaks and 'Lys-63'-linked ubiquitination of phosphorylated XRCC4, enhancing DNA non-homologous end joining. In Rattus norvegicus (Rat), this protein is F-box/WD repeat-containing protein 7.